The following is a 507-amino-acid chain: Maturase K (507 aa).

It belongs to the intron maturase 2 family. MatK subfamily.

Its subcellular location is the plastid. It is found in the chloroplast. Its function is as follows. Usually encoded in the trnK tRNA gene intron. Probably assists in splicing its own and other chloroplast group II introns. The polypeptide is Maturase K (Cananga odorata (Ylang-ylang tree)).